Consider the following 457-residue polypeptide: Bifunctional protein GlmU (457 aa).

The segment at 1–230 is pyrophosphorylase; that stretch reads MSKRYAVVLA…FEESLGVNDR (230 aa). UDP-N-acetyl-alpha-D-glucosamine-binding positions include 9–12, K23, Q73, and 78–79; these read LAAG and GT. D103 contacts Mg(2+). UDP-N-acetyl-alpha-D-glucosamine-binding residues include G140, E155, N170, and N228. N228 serves as a coordination point for Mg(2+). The interval 231–251 is linker; it reads IALAEASRLMQRRINENHMRN. The segment at 252–457 is N-acetyltransferase; that stretch reads GVTLVNPENT…GYAKHLNHGK (206 aa). 2 residues coordinate UDP-N-acetyl-alpha-D-glucosamine: R333 and K351. H363 serves as the catalytic Proton acceptor. UDP-N-acetyl-alpha-D-glucosamine is bound by residues Y366 and N377. Residues 386–387, A423, and R440 contribute to the acetyl-CoA site; that span reads NY.

This sequence in the N-terminal section; belongs to the N-acetylglucosamine-1-phosphate uridyltransferase family. It in the C-terminal section; belongs to the transferase hexapeptide repeat family. As to quaternary structure, homotrimer. The cofactor is Mg(2+).

It is found in the cytoplasm. The enzyme catalyses alpha-D-glucosamine 1-phosphate + acetyl-CoA = N-acetyl-alpha-D-glucosamine 1-phosphate + CoA + H(+). It carries out the reaction N-acetyl-alpha-D-glucosamine 1-phosphate + UTP + H(+) = UDP-N-acetyl-alpha-D-glucosamine + diphosphate. The protein operates within nucleotide-sugar biosynthesis; UDP-N-acetyl-alpha-D-glucosamine biosynthesis; N-acetyl-alpha-D-glucosamine 1-phosphate from alpha-D-glucosamine 6-phosphate (route II): step 2/2. Its pathway is nucleotide-sugar biosynthesis; UDP-N-acetyl-alpha-D-glucosamine biosynthesis; UDP-N-acetyl-alpha-D-glucosamine from N-acetyl-alpha-D-glucosamine 1-phosphate: step 1/1. It participates in bacterial outer membrane biogenesis; LPS lipid A biosynthesis. Its function is as follows. Catalyzes the last two sequential reactions in the de novo biosynthetic pathway for UDP-N-acetylglucosamine (UDP-GlcNAc). The C-terminal domain catalyzes the transfer of acetyl group from acetyl coenzyme A to glucosamine-1-phosphate (GlcN-1-P) to produce N-acetylglucosamine-1-phosphate (GlcNAc-1-P), which is converted into UDP-GlcNAc by the transfer of uridine 5-monophosphate (from uridine 5-triphosphate), a reaction catalyzed by the N-terminal domain. The polypeptide is Bifunctional protein GlmU (Listeria monocytogenes serotype 4b (strain CLIP80459)).